A 318-amino-acid chain; its full sequence is Methionyl-tRNA formyltransferase (318 aa).

110–113 (SLLP) contacts (6S)-5,6,7,8-tetrahydrofolate.

Belongs to the Fmt family.

The catalysed reaction is L-methionyl-tRNA(fMet) + (6R)-10-formyltetrahydrofolate = N-formyl-L-methionyl-tRNA(fMet) + (6S)-5,6,7,8-tetrahydrofolate + H(+). Functionally, attaches a formyl group to the free amino group of methionyl-tRNA(fMet). The formyl group appears to play a dual role in the initiator identity of N-formylmethionyl-tRNA by promoting its recognition by IF2 and preventing the misappropriation of this tRNA by the elongation apparatus. The polypeptide is Methionyl-tRNA formyltransferase (Geobacillus sp. (strain WCH70)).